Reading from the N-terminus, the 258-residue chain is Phosphate import ATP-binding protein PstB (258 aa).

The 243-residue stretch at 5 to 247 (IDVSGLNAYY…ERIFSNPSVQ (243 aa)) folds into the ABC transporter domain. Residue 37–44 (GPSGCGKS) participates in ATP binding.

The protein belongs to the ABC transporter superfamily. Phosphate importer (TC 3.A.1.7) family. As to quaternary structure, the complex is composed of two ATP-binding proteins (PstB), two transmembrane proteins (PstC and PstA) and a solute-binding protein (PstS).

It is found in the cell membrane. It carries out the reaction phosphate(out) + ATP + H2O = ADP + 2 phosphate(in) + H(+). Its function is as follows. Part of the ABC transporter complex PstSACB involved in phosphate import. Responsible for energy coupling to the transport system. This is Phosphate import ATP-binding protein PstB from Streptomyces coelicolor (strain ATCC BAA-471 / A3(2) / M145).